Here is a 538-residue protein sequence, read N- to C-terminus: Spindle pole body protein CSA6 (538 aa).

Disordered regions lie at residues 1–31 (MEDSTEDIIKSFTLEQSPEIKPKPKSKTSDL) and 57–129 (QNIS…KYQD). 2 stretches are compositionally biased toward basic and acidic residues: residues 18-30 (PEIKPKPKSKTSD) and 57-68 (QNISDSEHDLTP). Composition is skewed to polar residues over residues 86–96 (KFSSSIPQKPT) and 104–122 (TSPTKNYTDHINQLRSGPN). A coiled-coil region spans residues 144 to 237 (KQEQNLKLEN…RNERDELVKD (94 aa)). Over residues 304-323 (KKISEPSAAVEKDTTSEDKT) the composition is skewed to basic and acidic residues. 2 disordered regions span residues 304-338 (KKISEPSAAVEKDTTSEDKTPPIPNTANSSDTPRM) and 355-458 (SSNN…STKY). Composition is skewed to polar residues over residues 355 to 392 (SSNNKNTLSPKQAINSQTYSQPNNFSNNTVPPSQSAAY) and 407 to 425 (TNFYSSSTPNTNGYNQSSQ). Residues 426–444 (SDERPETFELPHVAKDHWL) show a composition bias toward basic and acidic residues. The span at 446–457 (RPTSERSTQSTK) shows a compositional bias: polar residues.

The protein resides in the cytoplasm. The protein localises to the cytoskeleton. It is found in the microtubule organizing center. It localises to the spindle pole body. In terms of biological role, plays a role in mitotic spindle pole body organization, possibly at the point of spindle pole body separation. Required for mitotic exit. In Candida albicans (strain SC5314 / ATCC MYA-2876) (Yeast), this protein is Spindle pole body protein CSA6.